We begin with the raw amino-acid sequence, 362 residues long: Phosphoserine aminotransferase (362 aa).

L-glutamate-binding residues include S9 and R42. Pyridoxal 5'-phosphate contacts are provided by residues 76–77 (GR), W102, T153, D174, and Q197. K198 is subject to N6-(pyridoxal phosphate)lysine. Residue 239–240 (NT) participates in pyridoxal 5'-phosphate binding.

The protein belongs to the class-V pyridoxal-phosphate-dependent aminotransferase family. SerC subfamily. As to quaternary structure, homodimer. It depends on pyridoxal 5'-phosphate as a cofactor.

Its subcellular location is the cytoplasm. The catalysed reaction is O-phospho-L-serine + 2-oxoglutarate = 3-phosphooxypyruvate + L-glutamate. It carries out the reaction 4-(phosphooxy)-L-threonine + 2-oxoglutarate = (R)-3-hydroxy-2-oxo-4-phosphooxybutanoate + L-glutamate. Its pathway is amino-acid biosynthesis; L-serine biosynthesis; L-serine from 3-phospho-D-glycerate: step 2/3. The protein operates within cofactor biosynthesis; pyridoxine 5'-phosphate biosynthesis; pyridoxine 5'-phosphate from D-erythrose 4-phosphate: step 3/5. In terms of biological role, catalyzes the reversible conversion of 3-phosphohydroxypyruvate to phosphoserine and of 3-hydroxy-2-oxo-4-phosphonooxybutanoate to phosphohydroxythreonine. The polypeptide is Phosphoserine aminotransferase (Escherichia coli O139:H28 (strain E24377A / ETEC)).